A 426-amino-acid chain; its full sequence is Enolase (426 aa).

Gln-163 lines the (2R)-2-phosphoglycerate pocket. The active-site Proton donor is Glu-205. Asp-242, Glu-283, and Asp-310 together coordinate Mg(2+). 4 residues coordinate (2R)-2-phosphoglycerate: Lys-335, Arg-364, Ser-365, and Lys-386. Catalysis depends on Lys-335, which acts as the Proton acceptor.

This sequence belongs to the enolase family. Mg(2+) is required as a cofactor.

It localises to the cytoplasm. Its subcellular location is the secreted. The protein resides in the cell surface. The enzyme catalyses (2R)-2-phosphoglycerate = phosphoenolpyruvate + H2O. It functions in the pathway carbohydrate degradation; glycolysis; pyruvate from D-glyceraldehyde 3-phosphate: step 4/5. Its function is as follows. Catalyzes the reversible conversion of 2-phosphoglycerate (2-PG) into phosphoenolpyruvate (PEP). It is essential for the degradation of carbohydrates via glycolysis. In Arthrobacter sp. (strain FB24), this protein is Enolase.